Reading from the N-terminus, the 1543-residue chain is Rho guanine nucleotide exchange factor 12 (1543 aa).

Residues 1 to 62 (MSGTQSTITD…KTKSSSEESR (62 aa)) are disordered. Residue Ser2 is modified to N-acetylserine. Residues 28-45 (SPTDKKQKVERSSSHDFD) show a composition bias toward basic and acidic residues. Phosphoserine is present on Ser41. A PDZ domain is found at 72–151 (CVIIQKDDNG…LTVQGRPPGS (80 aa)). Positions 194 to 262 (VGEENNVVHN…LSKATGSAQD (69 aa)) form a coiled coil. The interval 281 to 355 (AEADPGDGLC…GAPHIIGAED (75 aa)) is disordered. Over residues 293–312 (DWSSGDASRPSSDSADSPKS) the composition is skewed to low complexity. Residue Ser309 is modified to Phosphoserine. The span at 313 to 329 (SLRERSYLEEAPERSEG) shows a compositional bias: basic and acidic residues. Ser341 carries the post-translational modification Phosphoserine. Residues 367–558 (GQCSCFQSIE…LMYMKYLGVK (192 aa)) form the RGSL domain. Residues 574–710 (FLPKIKQSMK…DSTPRVPTTV (137 aa)) form a disordered region. Positions 582–592 (MKKDREGEEKG) are enriched in basic and acidic residues. Ser637 is subject to Phosphoserine. Low complexity predominate over residues 663-676 (ASSMSSATSGTALS). Thr736 is subject to Phosphothreonine. The DH domain maps to 787-977 (KRQEVINELF…RQILNYVNQA (191 aa)). Positions 981 to 1004 (AENKQRLEDYQRRLDTSNLKLSEY) form a coiled coil. Positions 1019–1132 (KMIHEGPLVW…WQDLICRMAA (114 aa)) constitute a PH domain. Residues 1137–1158 (QSTKPIPLPQPPPCEGDNDEEE) form a disordered region. Phosphoserine occurs at positions 1288, 1327, and 1377. 2 disordered regions span residues 1386–1405 (EAHS…KEEK) and 1441–1468 (PVTG…GPVS). Positions 1450-1460 (SSHQQQHSPQN) are enriched in polar residues. 2 positions are modified to phosphoserine: Ser1457 and Ser1540.

In terms of assembly, interacts with GNA12 and GNA13, probably through the RGS-like domain, with RHOA, PLXNB1 and PLXNB2, and through its PDZ domain with IGF1R beta subunit. Interacts with GCSAM. Found in a complex with ARHGEF11 and ARHGEF12; binding to ARHGEF11 and ARHGEF12 enhances CDC42 GEF activity of PLEKHG4B, and PLEKHG4B, in turn, inhibits ARHGEF11- and ARHGEF12-mediated RHOA activation. In terms of tissue distribution, expressed in brain, predominantly in neuronal cell bodies.

It is found in the cytoplasm. The protein localises to the membrane. May play a role in the regulation of RhoA GTPase by guanine nucleotide-binding alpha-12 (GNA12) and alpha-13 (GNA13). Acts as guanine nucleotide exchange factor (GEF) for RhoA GTPase and may act as GTPase-activating protein (GAP) for GNA12 and GNA13. This Mus musculus (Mouse) protein is Rho guanine nucleotide exchange factor 12 (Arhgef12).